A 136-amino-acid chain; its full sequence is Methylglyoxal synthase (136 aa).

Positions 1–136 constitute an MGS-like domain; that stretch reads MKIALIAHDR…REVVREENEA (136 aa). Substrate contacts are provided by residues His-8, Lys-12, 34–37, and 54–55; these read TGTT and SG. Asp-60 serves as the catalytic Proton donor/acceptor. A substrate-binding site is contributed by His-87.

The protein belongs to the methylglyoxal synthase family.

It carries out the reaction dihydroxyacetone phosphate = methylglyoxal + phosphate. Its function is as follows. Catalyzes the formation of methylglyoxal from dihydroxyacetone phosphate. This is Methylglyoxal synthase from Brevibacillus brevis (strain 47 / JCM 6285 / NBRC 100599).